The chain runs to 169 residues: uncharacterized protein (169 aa).

Positions 144-157 are enriched in low complexity; sequence AEAHSASPASSDSS. The interval 144 to 169 is disordered; the sequence is AEAHSASPASSDSSPLTNNIRPISIM. Positions 158–169 are enriched in polar residues; the sequence is PLTNNIRPISIM.

This is an uncharacterized protein from Saccharomyces cerevisiae (strain ATCC 204508 / S288c) (Baker's yeast).